The primary structure comprises 192 residues: Signal peptidase complex catalytic subunit SEC11C (192 aa).

Residues 2-28 (VRAGAVGTHLPASGLDIFGDLRKMNKR) are Cytoplasmic-facing. The chain crosses the membrane as a helical; Signal-anchor for type II membrane protein span at residues 29–48 (QLYYQVLNFAMIVSSALMIW). At 49–192 (KGLIVLTGSE…GAYVLLKRES (144 aa)) the chain is on the lumenal side. Catalysis depends on charge relay system residues serine 68, histidine 108, and aspartate 134. A C-terminal short (CTS) helix region spans residues 177 to 188 (ALLAVMGAYVLL).

Belongs to the peptidase S26B family. As to quaternary structure, component of the signal peptidase complex paralog C (SPC-C) composed of a catalytic subunit SEC11C and three accessory subunits SPCS1, SPCS2 and SPCS3. Within the complex, interacts with SPCS2 and SPCS3. The complex induces a local thinning of the ER membrane which is used to measure the length of the signal peptide (SP) h-region of protein substrates. This ensures the selectivity of the complex towards h-regions shorter than 18-20 amino acids. May undergo processing at the N-terminus.

It is found in the endoplasmic reticulum membrane. It catalyses the reaction Cleavage of hydrophobic, N-terminal signal or leader sequences from secreted and periplasmic proteins.. Catalytic component of the signal peptidase complex (SPC) which catalyzes the cleavage of N-terminal signal sequences from nascent proteins as they are translocated into the lumen of the endoplasmic reticulum. Specifically cleaves N-terminal signal peptides that contain a hydrophobic alpha-helix (h-region) shorter than 18-20 amino acids. The sequence is that of Signal peptidase complex catalytic subunit SEC11C (SEC11C) from Canis lupus familiaris (Dog).